Consider the following 583-residue polypeptide: Aspartate--tRNA ligase (583 aa).

Glu-174 contacts L-aspartate. The aspartate stretch occupies residues 198-201 (QITK). Arg-220 contributes to the L-aspartate binding site. ATP contacts are provided by residues 220–222 (RDE) and Gln-229. His-443 is an L-aspartate binding site. Glu-477 contacts ATP. Arg-484 is an L-aspartate binding site. 529–532 (GLDR) lines the ATP pocket.

It belongs to the class-II aminoacyl-tRNA synthetase family. Type 1 subfamily. As to quaternary structure, homodimer.

Its subcellular location is the cytoplasm. The enzyme catalyses tRNA(Asp) + L-aspartate + ATP = L-aspartyl-tRNA(Asp) + AMP + diphosphate. In terms of biological role, catalyzes the attachment of L-aspartate to tRNA(Asp) in a two-step reaction: L-aspartate is first activated by ATP to form Asp-AMP and then transferred to the acceptor end of tRNA(Asp). This chain is Aspartate--tRNA ligase, found in Streptococcus agalactiae serotype Ia (strain ATCC 27591 / A909 / CDC SS700).